We begin with the raw amino-acid sequence, 298 residues long: Protein OS-9 homolog (298 aa).

An N-terminal signal peptide occupies residues 1-25 (MGLAGGARVVLFVVAAAAAAALTAA). N-linked (GlcNAc...) asparagine glycosylation occurs at Asn-95. Residues 121–246 (DQCFYRHEGW…TVQSPMLCKN (126 aa)) enclose the MRH domain. A disulfide bridge connects residues Cys-123 and Cys-136. A mannooligosaccharide derivative contacts are provided by Trp-130, Trp-131, and Gln-143. N-linked (GlcNAc...) asparagine glycosylation is found at Asn-171 and Asn-197. Cystine bridges form between Cys-201/Cys-232 and Cys-216/Cys-244. Asp-202, Arg-208, Glu-228, and Tyr-234 together coordinate a mannooligosaccharide derivative.

The protein belongs to the OS-9 family. Interacts with HRD3.

Its subcellular location is the endoplasmic reticulum. In terms of biological role, lectin which functions in endoplasmic reticulum (ER) quality control and ER-associated degradation (ERAD). May bind terminally misfolded non-glycosylated proteins as well as improperly folded glycoproteins, retain them in the ER, and possibly transfer them to the ubiquitination machinery and promote their degradation. This Oryza sativa subsp. japonica (Rice) protein is Protein OS-9 homolog.